Here is a 366-residue protein sequence, read N- to C-terminus: MTPEHLPTEQYEAQLAEKVVRLQSMMAPFSDLVPEVFRSPVSHYRMRAEFRIWHDGDDLYHIIFDQQTKSRIRVDSFPAASELINQLMTAMIAGVRNNPILRHKLFQIDYLTTLRNQAVVSLLYHKKLDDEWRQQAEALRDALRAQNLNVHLIGRATKTKIALDQDYIDERLPIAGKEMIYRQVENSFTQPNAAMNIQMLEWALDVTKGSKGDLLELYCGNGNFSLALARNFDRVLATEIAKPSVAAAQYNIAANHIDNVQIIRMAAEEFTQAMNGVREFNRLQGIDLKSYQCETIFVDPPRSGLDSETEKMVQAYPRILYISCNPETLCKNLETLSQTHKVERLALFDQFPYTHHMECGVLLTAK.

5 residues coordinate S-adenosyl-L-methionine: Gln190, Tyr218, Asn223, Glu239, and Asp299. The Nucleophile role is filled by Cys324. The Proton acceptor role is filled by Glu358.

It belongs to the class I-like SAM-binding methyltransferase superfamily. RNA M5U methyltransferase family. TrmA subfamily.

It catalyses the reaction uridine(54) in tRNA + S-adenosyl-L-methionine = 5-methyluridine(54) in tRNA + S-adenosyl-L-homocysteine + H(+). The catalysed reaction is uridine(341) in tmRNA + S-adenosyl-L-methionine = 5-methyluridine(341) in tmRNA + S-adenosyl-L-homocysteine + H(+). Its function is as follows. Dual-specificity methyltransferase that catalyzes the formation of 5-methyluridine at position 54 (m5U54) in all tRNAs, and that of position 341 (m5U341) in tmRNA (transfer-mRNA). The protein is tRNA/tmRNA (uracil-C(5))-methyltransferase of Escherichia coli O6:H1 (strain CFT073 / ATCC 700928 / UPEC).